A 468-amino-acid polypeptide reads, in one-letter code: Procollagen C-endopeptidase enhancer 1 (468 aa).

The N-terminal stretch at 1 to 24 (MLPAALTSLLGPFLLAWVLPLARG) is a signal peptide. Residue Asn28 is glycosylated (N-linked (GlcNAc...) asparagine). Cystine bridges form between Cys36–Cys62, Cys89–Cys111, Cys158–Cys185, and Cys212–Cys235. CUB domains follow at residues 36–148 (CGGD…YSGR) and 158–272 (CGGR…YRTL). Thr41 bears the Phosphothreonine mark. Ser49 bears the Phosphoserine mark. The disordered stretch occupies residues 271–341 (TLPRDAVEKE…VAPDAPSITC (71 aa)). Positions 272-281 (LPRDAVEKES) are enriched in basic and acidic residues. Intrachain disulfides connect Cys341-Cys409 and Cys356-Cys460. The 120-residue stretch at 341-460 (CPKQYKRSGT…ILSNLSKRKC (120 aa)) folds into the NTR domain. N-linked (GlcNAc...) asparagine glycosylation occurs at Asn454.

In terms of assembly, interacts with EFEMP2. In terms of tissue distribution, expressed at highest levels in collagen-rich tissues, especially tendon. Also expressed in cornea and sterna.

It is found in the secreted. Binds to the C-terminal propeptide of type I procollagen and enhances procollagen C-proteinase activity. The protein is Procollagen C-endopeptidase enhancer 1 (Pcolce) of Rattus norvegicus (Rat).